Here is a 346-residue protein sequence, read N- to C-terminus: UDP-3-O-acylglucosamine N-acyltransferase (346 aa).

The active-site Proton acceptor is H240.

It belongs to the transferase hexapeptide repeat family. LpxD subfamily. Homotrimer.

The enzyme catalyses a UDP-3-O-[(3R)-3-hydroxyacyl]-alpha-D-glucosamine + a (3R)-hydroxyacyl-[ACP] = a UDP-2-N,3-O-bis[(3R)-3-hydroxyacyl]-alpha-D-glucosamine + holo-[ACP] + H(+). The protein operates within bacterial outer membrane biogenesis; LPS lipid A biosynthesis. Catalyzes the N-acylation of UDP-3-O-acylglucosamine using 3-hydroxyacyl-ACP as the acyl donor. Is involved in the biosynthesis of lipid A, a phosphorylated glycolipid that anchors the lipopolysaccharide to the outer membrane of the cell. In Bacteroides fragilis (strain YCH46), this protein is UDP-3-O-acylglucosamine N-acyltransferase.